The primary structure comprises 96 residues: Keratin-associated protein 12-3 (96 aa).

Tandem repeats lie at residues 10–14 (CQPTC), 15–19 (CIHSP), 24–28 (CYVPV), 30–34 (CQSSV), 35–39 (CMPVS), 45–49 (CVAPS), 50–54 (CQPSV), 55–59 (CVPVS), 60–64 (CRPII), 70–74 (CQSSG), 75–79 (CCQPP), 80–84 (CTTAL), 85–89 (CRPIS), and 90–94 (CSTPS). Residues 10–94 (CQPTCCIHSP…CRPISCSTPS (85 aa)) are 14 X 5 AA approximate repeats.

Belongs to the KRTAP type 12 family. Interacts with hair keratins. As to expression, restricted to a narrow region of the hair fiber cuticle, lying approximately 20 cell layers above the apex of the dermal papilla of the hair root; not detected in any other tissues.

Functionally, in the hair cortex, hair keratin intermediate filaments are embedded in an interfilamentous matrix, consisting of hair keratin-associated proteins (KRTAP), which are essential for the formation of a rigid and resistant hair shaft through their extensive disulfide bond cross-linking with abundant cysteine residues of hair keratins. The matrix proteins include the high-sulfur and high-glycine-tyrosine keratins. The sequence is that of Keratin-associated protein 12-3 (KRTAP12-3) from Homo sapiens (Human).